The following is a 468-amino-acid chain: Sushi repeat-containing protein SRPX2 (468 aa).

The first 25 residues, 1 to 25 (MMTSPLTQRGALSLLLLLMPAVTPT), serve as a signal peptide directing secretion. Sushi domains lie at 72–122 (ATCY…YCRQ), 123–181 (IRCH…VCVD), and 265–324 (RRCP…VCTP). 4 disulfides stabilise this stretch: Cys-74–Cys-108, Cys-94–Cys-120, Cys-125–Cys-166, and Cys-152–Cys-179. The HYR domain maps to 180–264 (VDIDPPKIRC…SCKFIVKVQV (85 aa)). 2 cysteine pairs are disulfide-bonded: Cys-267–Cys-309 and Cys-295–Cys-322.

Forms homooligomers. Interacts with PLAUR (via the UPAR/Ly6 domains), ADAMTS4 and CTSB. Interacts with HGF; the interaction increases the mitogenic activity of HGF. In terms of processing, contains chondroitin sulfate chains. Expressed in angiogenic endothelial cells (at protein level).

The protein resides in the secreted. It localises to the cytoplasm. It is found in the cell surface. Its subcellular location is the synapse. Functionally, acts as a ligand for the urokinase plasminogen activator surface receptor. Plays a role in angiogenesis by inducing endothelial cell migration and the formation of vascular network (cords). Involved in cellular migration and adhesion. Increases the phosphorylation levels of FAK. Interacts with and increases the mitogenic activity of HGF. Promotes synapse formation. Required for ultrasonic vocalizations. In Mus musculus (Mouse), this protein is Sushi repeat-containing protein SRPX2 (Srpx2).